The primary structure comprises 296 residues: Probable cell wall protein PGA41 (296 aa).

The signal sequence occupies residues 1 to 18; the sequence is MKFTIVLFTLISVTVAAA. Residues 146-212 show a composition bias toward low complexity; the sequence is IASSTKESSS…ITTISSDSST (67 aa). The interval 146–276 is disordered; it reads IASSTKESSS…PNSSQTAPGA (131 aa). Residues 220 to 245 show a composition bias toward gly residues; it reads QGGGGNSGNNGSNGDGGNDASGGGGV. 2 N-linked (GlcNAc...) asparagine glycosylation sites follow: Asn229 and Asn268. The span at 247 to 274 shows a compositional bias: low complexity; that stretch reads NENEQASSPPSSQSSTNSNQPNSSQTAP. Residue Gly275 is the site of GPI-anchor amidated glycine attachment. The propeptide at 276 to 296 is removed in mature form; it reads AANYLSSVSVGTLMILVLGLI.

The protein belongs to the IHD1 family. The GPI-anchor is attached to the protein in the endoplasmic reticulum and serves to target the protein to the cell surface. There, the glucosamine-inositol phospholipid moiety is cleaved off and the GPI-modified mannoprotein is covalently attached via its lipidless GPI glycan remnant to the 1,6-beta-glucan of the outer cell wall layer.

It localises to the secreted. The protein localises to the cell wall. The protein resides in the membrane. Its function is as follows. Probable GPI-anchored cell wall protein that may be involved in cell wall organization, hyphal growth, as well as in virulence. This chain is Probable cell wall protein PGA41 (PGA41), found in Candida albicans (strain SC5314 / ATCC MYA-2876) (Yeast).